Reading from the N-terminus, the 477-residue chain is 3-isopropylmalate dehydratase large subunit (477 aa).

[4Fe-4S] cluster is bound by residues Cys352, Cys413, and Cys416.

It belongs to the aconitase/IPM isomerase family. LeuC type 1 subfamily. As to quaternary structure, heterodimer of LeuC and LeuD. [4Fe-4S] cluster is required as a cofactor.

It carries out the reaction (2R,3S)-3-isopropylmalate = (2S)-2-isopropylmalate. Its pathway is amino-acid biosynthesis; L-leucine biosynthesis; L-leucine from 3-methyl-2-oxobutanoate: step 2/4. Its function is as follows. Catalyzes the isomerization between 2-isopropylmalate and 3-isopropylmalate, via the formation of 2-isopropylmaleate. The chain is 3-isopropylmalate dehydratase large subunit from Pseudomonas entomophila (strain L48).